Here is a 284-residue protein sequence, read N- to C-terminus: Ribosomal RNA small subunit methyltransferase A (284 aa).

The S-adenosyl-L-methionine site is built by asparagine 33, leucine 35, glycine 60, glutamate 81, aspartate 101, and asparagine 124.

The protein belongs to the class I-like SAM-binding methyltransferase superfamily. rRNA adenine N(6)-methyltransferase family. RsmA subfamily.

The protein localises to the cytoplasm. It carries out the reaction adenosine(1518)/adenosine(1519) in 16S rRNA + 4 S-adenosyl-L-methionine = N(6)-dimethyladenosine(1518)/N(6)-dimethyladenosine(1519) in 16S rRNA + 4 S-adenosyl-L-homocysteine + 4 H(+). Functionally, specifically dimethylates two adjacent adenosines (A1518 and A1519) in the loop of a conserved hairpin near the 3'-end of 16S rRNA in the 30S particle. May play a critical role in biogenesis of 30S subunits. The protein is Ribosomal RNA small subunit methyltransferase A of Chlamydia felis (strain Fe/C-56) (Chlamydophila felis).